The chain runs to 469 residues: Argininosuccinate lyase (469 aa).

Belongs to the lyase 1 family. Argininosuccinate lyase subfamily.

Its subcellular location is the cytoplasm. It carries out the reaction 2-(N(omega)-L-arginino)succinate = fumarate + L-arginine. It participates in amino-acid biosynthesis; L-arginine biosynthesis; L-arginine from L-ornithine and carbamoyl phosphate: step 3/3. The protein is Argininosuccinate lyase of Saccharophagus degradans (strain 2-40 / ATCC 43961 / DSM 17024).